The following is a 333-amino-acid chain: Anthranilate phosphoribosyltransferase (333 aa).

Residues G81, 84–85 (GD), T89, 91–94 (NIST), 109–117 (KHGNRSVSS), and A121 each bind 5-phospho-alpha-D-ribose 1-diphosphate. G81 serves as a coordination point for anthranilate. Residue S93 participates in Mg(2+) binding. Position 112 (N112) interacts with anthranilate. R167 lines the anthranilate pocket. Mg(2+) is bound by residues D225 and E226.

It belongs to the anthranilate phosphoribosyltransferase family. As to quaternary structure, homodimer. The cofactor is Mg(2+).

The enzyme catalyses N-(5-phospho-beta-D-ribosyl)anthranilate + diphosphate = 5-phospho-alpha-D-ribose 1-diphosphate + anthranilate. It participates in amino-acid biosynthesis; L-tryptophan biosynthesis; L-tryptophan from chorismate: step 2/5. Its function is as follows. Catalyzes the transfer of the phosphoribosyl group of 5-phosphorylribose-1-pyrophosphate (PRPP) to anthranilate to yield N-(5'-phosphoribosyl)-anthranilate (PRA). The polypeptide is Anthranilate phosphoribosyltransferase (Actinobacillus succinogenes (strain ATCC 55618 / DSM 22257 / CCUG 43843 / 130Z)).